The following is a 138-amino-acid chain: ATP synthase epsilon chain (138 aa).

This sequence belongs to the ATPase epsilon chain family. In terms of assembly, F-type ATPases have 2 components, CF(1) - the catalytic core - and CF(0) - the membrane proton channel. CF(1) has five subunits: alpha(3), beta(3), gamma(1), delta(1), epsilon(1). CF(0) has three main subunits: a, b and c.

It localises to the cell inner membrane. Its function is as follows. Produces ATP from ADP in the presence of a proton gradient across the membrane. The sequence is that of ATP synthase epsilon chain from Geobacter sp. (strain M21).